Consider the following 363-residue polypeptide: Chorismate synthase (363 aa).

Positions 48 and 54 each coordinate NADP(+). FMN contacts are provided by residues 125–127, 238–239, G278, 293–297, and R319; these read RSS, NA, and KPTSS.

The protein belongs to the chorismate synthase family. As to quaternary structure, homotetramer. FMNH2 is required as a cofactor.

It catalyses the reaction 5-O-(1-carboxyvinyl)-3-phosphoshikimate = chorismate + phosphate. The protein operates within metabolic intermediate biosynthesis; chorismate biosynthesis; chorismate from D-erythrose 4-phosphate and phosphoenolpyruvate: step 7/7. Functionally, catalyzes the anti-1,4-elimination of the C-3 phosphate and the C-6 proR hydrogen from 5-enolpyruvylshikimate-3-phosphate (EPSP) to yield chorismate, which is the branch point compound that serves as the starting substrate for the three terminal pathways of aromatic amino acid biosynthesis. This reaction introduces a second double bond into the aromatic ring system. This chain is Chorismate synthase, found in Alcanivorax borkumensis (strain ATCC 700651 / DSM 11573 / NCIMB 13689 / SK2).